The following is a 328-amino-acid chain: MIRFAVIGTNWITRQFVEAAHESGKYKLTAVYSRSLEQAQHFANDFSVEHLFTSLEAMAESDAIDAVYIASPNSLHFSQTQLFLSHKINVICEKPLASNLAEVDAAIACARENQVVLFEAFKTACLPNFHLLRQALPKVGKLRKVFFNYCQYSSRYQRYLDGENPNTFNPAFSNGSIMDIGFYCLASAVALFGEPKSVQATASLLASGVDAQGVVVMDYGDFSVTLQHSKVSDSVLASEIQGEAGSLVIEKLSECQKVCFVPRGSQMQDLTQPQHINTMLYEAELFATLVDEHLVDHPGLAVSRITAKLLTEIRRQTGVIFPADSVKL.

Belongs to the Gfo/Idh/MocA family.

This is an uncharacterized protein from Escherichia coli (strain K12).